The primary structure comprises 167 residues: MLPMITGFMNYGQQTLRAARYIGQGFMITLSHTNRLPVTIQYPYEKLITSERFRGRIHFEFDKCIACEVCVRVCPIDLPVVDWKLETNIRKKRLLNYSIDFGICIFCGNCVEYCPTNCLSMTEEYEFSTYDRHELNYNQIALGRLPMSVIDDYTIRTILNSPQTKKG.

4Fe-4S ferredoxin-type domains follow at residues 55–84 and 95–124; these read GRIH…VDWK and LNYS…MTEE. Positions 64, 67, 70, 74, 104, 107, 110, and 114 each coordinate [4Fe-4S] cluster.

It belongs to the complex I 23 kDa subunit family. As to quaternary structure, NDH is composed of at least 16 different subunits, 5 of which are encoded in the nucleus. Requires [4Fe-4S] cluster as cofactor.

It is found in the plastid. The protein resides in the chloroplast thylakoid membrane. The catalysed reaction is a plastoquinone + NADH + (n+1) H(+)(in) = a plastoquinol + NAD(+) + n H(+)(out). It catalyses the reaction a plastoquinone + NADPH + (n+1) H(+)(in) = a plastoquinol + NADP(+) + n H(+)(out). In terms of biological role, NDH shuttles electrons from NAD(P)H:plastoquinone, via FMN and iron-sulfur (Fe-S) centers, to quinones in the photosynthetic chain and possibly in a chloroplast respiratory chain. The immediate electron acceptor for the enzyme in this species is believed to be plastoquinone. Couples the redox reaction to proton translocation, and thus conserves the redox energy in a proton gradient. The chain is NAD(P)H-quinone oxidoreductase subunit I, chloroplastic from Lepidium virginicum (Virginia pepperweed).